The sequence spans 394 residues: Elongation factor Tu (394 aa).

The tr-type G domain maps to 10-204; that stretch reads KPHVNVGTIG…ALDTYIPEPE (195 aa). The interval 19–26 is G1; the sequence is GHVDHGKT. GTP is bound at residue 19 to 26; the sequence is GHVDHGKT. Residue Thr-26 coordinates Mg(2+). The segment at 60–64 is G2; it reads GITIN. The tract at residues 81–84 is G3; that stretch reads DCPG. GTP is bound by residues 81-85 and 136-139; these read DCPGH and NKCD. The interval 136–139 is G4; that stretch reads NKCD. The tract at residues 174–176 is G5; it reads SAL.

Belongs to the TRAFAC class translation factor GTPase superfamily. Classic translation factor GTPase family. EF-Tu/EF-1A subfamily. In terms of assembly, monomer.

It is found in the cytoplasm. The catalysed reaction is GTP + H2O = GDP + phosphate + H(+). GTP hydrolase that promotes the GTP-dependent binding of aminoacyl-tRNA to the A-site of ribosomes during protein biosynthesis. This Shewanella pealeana (strain ATCC 700345 / ANG-SQ1) protein is Elongation factor Tu.